A 474-amino-acid polypeptide reads, in one-letter code: Alkylcitrate dehydratase phiI (474 aa).

It belongs to the PrpD family. As to quaternary structure, monomer.

It carries out the reaction (4E,11E)-2-hydroxytrideca-4,11-dien-1,2,3-tricarboxylate + 2 H(+) = [4-(deca-1,8-diyl)-2,5-dioxo-2,5-dihydro-3-furanyl]acetate + 2 H2O. Its pathway is secondary metabolite biosynthesis. Functionally, alkylcitrate dehydratasee; part of the gene cluster that mediates the biosynthesis of the antihypercholesterolemic agents phomoidrides which are dimeric anhydrides. Within the pathway, the alkylcitrate synthase (ACS) tstiJ and the alkylcitrate dehydratase (ACDH) tstI produce the decarboxylated monomeric anhydrides by coupling the C12-fatty acyl product from phiA with oxalacetic acid. The pathway begins with the highly reducing polyketide synthase tstA that catalyzes the formation of a C12-fatty acyl-ACP, starting from one acetate and 5 malonate units. The hydrolase tstM is involved in the release of the C12-fatty acyl chain from phiA. The alkylcitrate synthase (ACS) tstJ and the alkylcitrate dehydratase (ACDH) tstI then give rise to decarboxylated monomeric anhydrides by coupling the C12-fatty acyl chain with oxalacetic acid. The cyclase tstC is responsible for the dimerization of the monomeric anhydrides which leads to the production of prephomoidride that contains the characteristic bicyclo[4.3.1]deca-1,6-diene system of phomoidrides. Iterative oxidation catalyzed by the alpha-ketoglutarate-dependent dioxygenase tstK produced then phomoidride A. Finally, the methyltransferase tstE converts phomoidride A to phomoidride B via an acetalization reaction. The phosphatidylethanolamine-binding protein tstB and tstN are not essential for dimerization and their functions have still to be determined. In Talaromyces stipitatus (strain ATCC 10500 / CBS 375.48 / QM 6759 / NRRL 1006) (Penicillium stipitatum), this protein is Alkylcitrate dehydratase phiI.